A 61-amino-acid chain; its full sequence is Large ribosomal subunit protein eL37 (61 aa).

Zn(2+) contacts are provided by Cys20, Cys23, Cys35, and Cys38. The C4-type zinc finger occupies 20-38; that stretch reads CRRCGRRAYHVRKKRCAAC.

The protein belongs to the eukaryotic ribosomal protein eL37 family. Requires Zn(2+) as cofactor.

In terms of biological role, binds to the 23S rRNA. In Methanocaldococcus jannaschii (strain ATCC 43067 / DSM 2661 / JAL-1 / JCM 10045 / NBRC 100440) (Methanococcus jannaschii), this protein is Large ribosomal subunit protein eL37 (rpl37e).